A 521-amino-acid polypeptide reads, in one-letter code: MTHFPVNIASDKQEFDPERWAKTPTTESSVNGENGTAPTSGLPSRHPSTGISVLIVGAGMGGLMTALECWRKGHDVAGILERSEGPVYSGDIIVMQPSAVSIIRHWPDMLHDMKAEQVHAVVSYETHDGRHIYGPTVPSFNDPEHLETRKGPFVAPAQVRRKFYRMLLRQVARCGLRVEYGKTVKSYFEDEKDGKGGVIIATTGEAEVRVADIVVAADGLKSPSEILIAGQHVPPRSSGLSIYRTAFPKDLAMQNELVRKRWSDSPPIWEYWLGPGMYLGVFVGDDIISFGFTPRDDIVEGTATESWEPDTDPETVAQAMLSGAGDWDPAVLALIRSAPKGAIVHWPLLWRDLRREWTSPAGRVVQVGDSAHSFIPTSGNGGSQALEDAITLATCLQLAGSSQRAYLGTKIYNLLRYERVSCAQKMSFVNSQLKTGTDWDAIWKDPAKIRTRFPKWIFQHDPEAYAYEKFGEAFAHLLDGREFVNTNYPPGHEFRAWTVEEVWRNIADGKRVEDLLDGDWS.

A disordered region spans residues 1 to 48 (MTHFPVNIASDKQEFDPERWAKTPTTESSVNGENGTAPTSGLPSRHPS). Residues 11 to 21 (DKQEFDPERWA) show a composition bias toward basic and acidic residues. The segment covering 23–48 (TPTTESSVNGENGTAPTSGLPSRHPS) has biased composition (polar residues). Valine 94 and arginine 160 together coordinate FAD. Catalysis depends on residues arginine 244 and tyrosine 271. Residues aspartate 369 and glycine 382 each coordinate FAD.

It belongs to the paxM FAD-dependent monooxygenase family. The cofactor is FAD.

Its pathway is secondary metabolite biosynthesis. In terms of biological role, FAD-dependent monooxygenase; part of the gene cluster that mediates the biosynthesis of monodictyphenone, a prenyl xanthone derivative. The pathway begins with the synthesis of atrochrysone thioester by the polyketide synthase (PKS) mdpG. The atrochrysone carboxyl ACP thioesterase mdpF then breaks the thioester bond and releases the atrochrysone carboxylic acid from mdpG. The atrochrysone carboxylic acid is then converted to atrochrysone which is further transformed into emodin anthrone. The next step is performed by the anthrone oxygenase mdpH that catalyzes the oxidation of emodinanthrone to emodin. Emodin is further modified to yield monodictyphenone via several steps involving mdpB, mdpC mdpJ, mdpK and mdpL. These enzymes with xptA, xptB and xptC are also proposed to be involved in the synthesis of shamixanthone from emodin. Especially, direct reduction of emodin by the short chain dehydrogenase mdpC followed by dehydration catalyzed by the scytalone dehydratase-like protein mdpB gives loss of oxygen and formation of chrysophanol intermediate in two simple steps. The protein is FAD-dependent monooxygenase mdpD of Emericella nidulans (strain FGSC A4 / ATCC 38163 / CBS 112.46 / NRRL 194 / M139) (Aspergillus nidulans).